The primary structure comprises 496 residues: MDDVPAPTPAPAPPAAAAPRVPFHCSECGKSFRYRSDLRRHFARHTALKPHACPRCGKGFKHSFNLANHLRSHTGERPYRCSACPKGFRDSTGLLHHQVVHTGEKPYCCLVCELRFSSRSSLGRHLKRQHRGVLPSPLQPGPGLPALSAPCSVCCNVGPCSVCGGSGAGGGEGPEGAGAGLGSWGLAEAAAAAAASLPPFACGACARRFDHGRELAAHWAAHTDVKPFKCPRCERDFNAPALLERHKLTHDLQGPGAPPAQAWAAGPGAGPETAGEGTAAEAGDAPLASDRRLLLGPAGGGVPKLGGLLPEGGGEAPAPAAAAEPSEDTLYQCDCGTFFASAAALASHLEAHSGPATYGCGHCGALYAALAALEEHRRVSHGEGGGEEAATAAREREPASGEPPSGSGRGKKIFGCSECEKLFRSPRDLERHVLVHTGEKPFPCLECGKFFRHECYLKRHRLLHGTERPFPCHICGKGFITLSNLSRHLKLHRGMD.

Residue Met-1 is modified to N-acetylmethionine. 6 consecutive C2H2-type zinc fingers follow at residues 23-45 (FHCSECGKSFRYRSDLRRHFARH), 51-73 (HACPRCGKGFKHSFNLANHLRSH), 79-101 (YRCSACPKGFRDSTGLLHHQVVH), 107-130 (YCCLVCELRFSSRSSLGRHLKRQH), 200-222 (FACGACARRFDHGRELAAHWAAH), and 228-250 (FKCPRCERDFNAPALLERHKLTH). The disordered stretch occupies residues 250-280 (HDLQGPGAPPAQAWAAGPGAGPETAGEGTAA). Positions 259–280 (PAQAWAAGPGAGPETAGEGTAA) are enriched in low complexity. C2H2-type zinc fingers lie at residues 331–352 (YQCDCGTFFASAAALASHLEAH), 358–381 (YGCGHCGALYAALAALEEHRRVSH), 414–436 (FGCSECEKLFRSPRDLERHVLVH), 442–464 (FPCLECGKFFRHECYLKRHRLLH), and 470–492 (FPCHICGKGFITLSNLSRHLKLH). The tract at residues 378–412 (RVSHGEGGGEEAATAAREREPASGEPPSGSGRGKK) is disordered.

As to quaternary structure, interacts with FLT3 cytoplasmic catalytic domain, following receptor stimulation, in a kinase-independent manner. Does not interact with other structurally related receptor tyrosine kinases, including KIT, CSF1R and PDGFR. Interacts with NRL. As to expression, widely expressed.

The protein localises to the cytoplasm. The protein resides in the nucleus. May be a transcriptional repressor of NRL function in photoreceptors. Does not repress CRX-mediated transactivation. This chain is Flt3-interacting zinc finger protein 1 (FIZ1), found in Homo sapiens (Human).